The primary structure comprises 583 residues: MDLLPPKPKYNPLRNESLSSLEEGASGSTPPEELPSPSASSLGPILPPLPGDDSPTTLCSFFPRMSNLRLANPAGGRPGSKGEPGRAADDGEGIVGAAMPDSGPLPLLQDMNKLSGGGGRRTRVEGGQLGGEEWTRHGSFVNKPTRGWLHPNDKVMGPGVSYLVRYMGCVEVLQSMRALDFNTRTQVTREAISLVCEAVPGAKGATRRRKPCSRPLSSILGRSNLKFAGMPITLTVSTSSLNLMAADCKQIIANHHMQSISFASGGDPDTAEYVAYVAKDPVNQRACHILECPEGLAQDVISTIGQAFELRFKQYLRNPPKLVTPHDRMAGFDGSAWDEEEEEPPDHQYYNDFPGKEPPLGGVVDMRLREGAAPGAARPTAPNAQTPSHLGATLPVGQPVGGDPEVRKQMPPPPPCPGRELFDDPSYVNVQNLDKARQAVGGAGPPNPAINGSAPRDLFDMKPFEDALRVPPPPQSVSMAEQLRGEPWFHGKLSRREAEALLQLNGDFLVRESTTTPGQYVLTGLQSGQPKHLLLVDPEGVVRTKDHRFESVSHLISYHMDNHLPIISAGSELCLQQPVERKL.

Methionine 1 carries the N-acetylmethionine modification. The segment at 1 to 92 is disordered; that stretch reads MDLLPPKPKY…EPGRAADDGE (92 aa). Low complexity predominate over residues 16 to 44; it reads ESLSSLEEGASGSTPPEELPSPSASSLGP. Serine 36 and serine 139 each carry phosphoserine. Lysine 154 carries the N6-acetyllysine modification. One can recognise a PID domain in the interval 156–339; it reads MGPGVSYLVR…AGFDGSAWDE (184 aa). The tract at residues 340 to 487 is CH1; it reads EEEEPPDHQY…SMAEQLRGEP (148 aa). Phosphotyrosine occurs at positions 349 and 350. Low complexity predominate over residues 372-384; it reads AAPGAARPTAPNA. Residues 372–415 form a disordered region; that stretch reads AAPGAARPTAPNAQTPSHLGATLPVGQPVGGDPEVRKQMPPPPP. Tyrosine 427 carries the post-translational modification Phosphotyrosine. Serine 453 carries the post-translational modification Phosphoserine. Residues 488–579 form the SH2 domain; sequence WFHGKLSRRE…GSELCLQQPV (92 aa).

As to quaternary structure, interacts with CPNE3; this interaction may mediate the binding of CPNE3 with ERBB2. Interacts with the NPXY motif of tyrosine-phosphorylated IGF1R and INSR in vitro via the PID domain. Once activated, binds to GRB2. Interacts with tyrosine-phosphorylated CD3T and DDR2. Interacts with the N-terminal region of SH2B2. Interacts with phosphorylated LRP1 and IRS4. Interacts with INPP5D/SHIP1 and INPPL1/SHIP2. Interacts with TRIM31. Interacts with PTPN6/SHP (tyrosine phosphorylated). Identified in a complex containing FGFR4, NCAM1, CDH2, PLCG1, FRS2, SRC, SHC1, GAP43 and CTT. Interacts with ALK, GAB2, GRB7 and KIT. Interacts with FLT4 (tyrosine-phosphorylated). Interacts with EPHB1 and GRB2; activates the MAPK/ERK cascade to regulate cell migration. Interacts with PDGFRB (tyrosine-phosphorylated). Interacts with ERBB4. Interacts with TEK/TIE2 (tyrosine-phosphorylated). Interacts with the Trk receptors NTRK1, NTRK2 and NTRK3; in a phosphotyrosine-dependent manner. Interacts with PTK2/FAK1. Interacts with CEACAM1; this interaction is CEACAM1-phosphorylation-dependent and mediates interaction with EGFR or INSR resulting in decrease coupling of SHC1 to the MAPK3/ERK1-MAPK1/ERK2 pathway. Interacts (via PID domain) with PEAK1 (when phosphorylated at 'Tyr-1188'). Found in a complex with PPP1CA, PPP1CC, SHC1 and PEAK1. (Microbial infection) Interacts with herpes simplex virus 1 UL46. Post-translationally, phosphorylated by activated epidermal growth factor receptor. Phosphorylated in response to FLT4 and KIT signaling. Isoform p46Shc and isoform p52Shc are phosphorylated on tyrosine residues of the Pro-rich domain. Isoform p66Shc is phosphorylated on Ser-36 by PRKCB upon treatment with insulin, hydrogen peroxide or irradiation with ultraviolet light. Tyrosine phosphorylated in response to FLT3 signaling. Tyrosine phosphorylated by activated PTK2B/PYK2. Tyrosine phosphorylated by ligand-activated ALK. Tyrosine phosphorylated by ligand-activated PDGFRB. Tyrosine phosphorylated by TEK/TIE2. May be tyrosine phosphorylated by activated PTK2/FAK1; tyrosine phosphorylation was seen in an astrocytoma biopsy, where PTK2/FAK1 kinase activity is high, but not in normal brain tissue. Isoform p52Shc dephosphorylation by PTPN2 may regulate interaction with GRB2. In terms of tissue distribution, widely expressed. Expressed in neural stem cells but absent in mature neurons.

It is found in the cytoplasm. Its subcellular location is the cell junction. The protein localises to the focal adhesion. It localises to the mitochondrion matrix. The protein resides in the mitochondrion. Functionally, signaling adapter that couples activated growth factor receptors to signaling pathways. Participates in a signaling cascade initiated by activated KIT and KITLG/SCF. Isoform p46Shc and isoform p52Shc, once phosphorylated, couple activated receptor tyrosine kinases to Ras via the recruitment of the GRB2/SOS complex and are implicated in the cytoplasmic propagation of mitogenic signals. Isoform p46Shc and isoform p52Shc may thus function as initiators of the Ras signaling cascade in various non-neuronal systems. Isoform p66Shc does not mediate Ras activation, but is involved in signal transduction pathways that regulate the cellular response to oxidative stress and life span. Isoform p66Shc acts as a downstream target of the tumor suppressor p53 and is indispensable for the ability of stress-activated p53 to induce elevation of intracellular oxidants, cytochrome c release and apoptosis. The expression of isoform p66Shc has been correlated with life span. Participates in signaling downstream of the angiopoietin receptor TEK/TIE2, and plays a role in the regulation of endothelial cell migration and sprouting angiogenesis. This chain is SHC-transforming protein 1 (SHC1), found in Homo sapiens (Human).